Here is a 193-residue protein sequence, read N- to C-terminus: Probable nicotinate-nucleotide adenylyltransferase (193 aa).

The protein belongs to the NadD family.

The catalysed reaction is nicotinate beta-D-ribonucleotide + ATP + H(+) = deamido-NAD(+) + diphosphate. The protein operates within cofactor biosynthesis; NAD(+) biosynthesis; deamido-NAD(+) from nicotinate D-ribonucleotide: step 1/1. Catalyzes the reversible adenylation of nicotinate mononucleotide (NaMN) to nicotinic acid adenine dinucleotide (NaAD). The protein is Probable nicotinate-nucleotide adenylyltransferase of Chlorobium phaeovibrioides (strain DSM 265 / 1930) (Prosthecochloris vibrioformis (strain DSM 265)).